The chain runs to 343 residues: MTKTMLRALKGETLPTPPIWLMRQAGRYLPEYRATRAQAGDFLSLCYTPDLAAEVTLQPIRRYGFDAAILFADILLLPQALGADLWFETGEGPRMSTITDMAGVTALKGRDDIHETLAPVYETCRILARELPKETTFIGFAGMPWTVATYMIAGRGSKDQAAAHKLKDTDRPAFEALMDRVTEATIEYLAKQVEAGCEVVKLFDSWAGSLKGQDFEDFAVAPAKRIVSELKARFPGLPVIAFPREAGEGYIGFAEKTGADCVAIDNSVSPEWAAEKVQAGRTCVQGNLDPKYMVTGGEELVQATKRVVEAFRNGPHIFNLGHGITPEADPENVTLLVETIRGK.

Substrate contacts are provided by residues 23-27 (RQAGR), D73, Y150, S205, and H322.

It belongs to the uroporphyrinogen decarboxylase family. Homodimer.

It localises to the cytoplasm. It carries out the reaction uroporphyrinogen III + 4 H(+) = coproporphyrinogen III + 4 CO2. It functions in the pathway porphyrin-containing compound metabolism; protoporphyrin-IX biosynthesis; coproporphyrinogen-III from 5-aminolevulinate: step 4/4. Catalyzes the decarboxylation of four acetate groups of uroporphyrinogen-III to yield coproporphyrinogen-III. The polypeptide is Uroporphyrinogen decarboxylase (Cereibacter sphaeroides (strain KD131 / KCTC 12085) (Rhodobacter sphaeroides)).